Reading from the N-terminus, the 165-residue chain is Large ribosomal subunit protein uL10 (165 aa).

It belongs to the universal ribosomal protein uL10 family. Part of the ribosomal stalk of the 50S ribosomal subunit. The N-terminus interacts with L11 and the large rRNA to form the base of the stalk. The C-terminus forms an elongated spine to which L12 dimers bind in a sequential fashion forming a multimeric L10(L12)X complex.

Its function is as follows. Forms part of the ribosomal stalk, playing a central role in the interaction of the ribosome with GTP-bound translation factors. The polypeptide is Large ribosomal subunit protein uL10 (Burkholderia thailandensis (strain ATCC 700388 / DSM 13276 / CCUG 48851 / CIP 106301 / E264)).